The chain runs to 273 residues: NADPH-dependent 7-cyano-7-deazaguanine reductase (273 aa).

Valine 81–serine 83 is a binding site for substrate. Serine 83 to lysine 84 serves as a coordination point for NADPH. Catalysis depends on cysteine 179, which acts as the Thioimide intermediate. Aspartate 186 serves as the catalytic Proton donor. Alanine 218–glutamate 219 contributes to the substrate binding site. Arginine 247 to glycine 248 contributes to the NADPH binding site.

It belongs to the GTP cyclohydrolase I family. QueF type 2 subfamily. In terms of assembly, homodimer.

Its subcellular location is the cytoplasm. The enzyme catalyses 7-aminomethyl-7-carbaguanine + 2 NADP(+) = 7-cyano-7-deazaguanine + 2 NADPH + 3 H(+). It participates in tRNA modification; tRNA-queuosine biosynthesis. In terms of biological role, catalyzes the NADPH-dependent reduction of 7-cyano-7-deazaguanine (preQ0) to 7-aminomethyl-7-deazaguanine (preQ1). This is NADPH-dependent 7-cyano-7-deazaguanine reductase from Rickettsia massiliae (strain Mtu5).